The chain runs to 193 residues: ATP-dependent Clp protease proteolytic subunit (193 aa).

Residue Ser-98 is the Nucleophile of the active site. His-123 is a catalytic residue.

Belongs to the peptidase S14 family. Fourteen ClpP subunits assemble into 2 heptameric rings which stack back to back to give a disk-like structure with a central cavity, resembling the structure of eukaryotic proteasomes.

The protein resides in the cytoplasm. The catalysed reaction is Hydrolysis of proteins to small peptides in the presence of ATP and magnesium. alpha-casein is the usual test substrate. In the absence of ATP, only oligopeptides shorter than five residues are hydrolyzed (such as succinyl-Leu-Tyr-|-NHMec, and Leu-Tyr-Leu-|-Tyr-Trp, in which cleavage of the -Tyr-|-Leu- and -Tyr-|-Trp bonds also occurs).. Cleaves peptides in various proteins in a process that requires ATP hydrolysis. Has a chymotrypsin-like activity. Plays a major role in the degradation of misfolded proteins. The chain is ATP-dependent Clp protease proteolytic subunit from Histophilus somni (strain 2336) (Haemophilus somnus).